A 103-amino-acid chain; its full sequence is Small ribosomal subunit protein uS10 (103 aa).

The protein belongs to the universal ribosomal protein uS10 family. In terms of assembly, part of the 30S ribosomal subunit.

Its function is as follows. Involved in the binding of tRNA to the ribosomes. The chain is Small ribosomal subunit protein uS10 from Chlorobaculum parvum (strain DSM 263 / NCIMB 8327) (Chlorobium vibrioforme subsp. thiosulfatophilum).